The sequence spans 223 residues: CKLF-like MARVEL transmembrane domain-containing protein 5 (223 aa).

Positions 29 to 213 (FLTSHKGILL…DAFKIYRTEM (185 aa)) constitute an MARVEL domain. The next 4 helical transmembrane spans lie at 35 to 55 (GILL…FTAS), 56 to 76 (ISAY…FLFL), 162 to 182 (FLRC…AVTS), and 186 to 206 (AAIA…YDAF).

Belongs to the chemokine-like factor family. As to expression, highly expressed in the brain.

It is found in the membrane. The sequence is that of CKLF-like MARVEL transmembrane domain-containing protein 5 (CMTM5) from Homo sapiens (Human).